The chain runs to 297 residues: Sirohydrochlorin cobaltochelatase CbiKP (297 aa).

The N-terminal stretch at 1 to 28 (MSRHPMVTRLLCLVFSCLIILACSPAFA) is a signal peptide. H124 contributes to the heme binding site. The active-site Proton acceptor is H182. Positions 182, 212, and 244 each coordinate Co(2+).

Belongs to the CbiK family. Homotetramer; dimer of dimers.

It is found in the periplasm. It catalyses the reaction Co-sirohydrochlorin + 2 H(+) = sirohydrochlorin + Co(2+). The catalysed reaction is siroheme + 2 H(+) = sirohydrochlorin + Fe(2+). Functionally, catalyzes the insertion of Co(2+) into sirohydrochlorin. To a lesser extent, is also able to insert Fe(2+) into sirohydrochlorin, yielding siroheme. Its periplasmic location means that it cannot participate in cobalamin biosynthesis and its genomic environment suggests it is likely to be associated with a heme or metal transport system. This Nitratidesulfovibrio vulgaris (strain ATCC 29579 / DSM 644 / CCUG 34227 / NCIMB 8303 / VKM B-1760 / Hildenborough) (Desulfovibrio vulgaris) protein is Sirohydrochlorin cobaltochelatase CbiKP (cbiKp).